A 256-amino-acid chain; its full sequence is Tyrosine-protein kinase-interacting protein (256 aa).

Residues Met-1 to Pro-14 are compositionally biased toward acidic residues. The interval Met-1–Ile-49 is disordered. Over Met-1–Asn-228 the chain is Cytoplasmic. Over residues Glu-15–Leu-26 the composition is skewed to basic and acidic residues. The segment covering Ser-27–Ser-42 has biased composition (low complexity). Tyr-114 is modified (phosphotyrosine; by host LCK). Phosphotyrosine; by host is present on Tyr-127. The CSKH/LBD2 stretch occupies residues Glu-146–Tyr-155. Residues Pro-162–Pro-183 are disordered. The SH3B/LBD1 stretch occupies residues Met-174 to Pro-183. A compositionally biased stretch (pro residues) spans Met-174–Pro-183. Residues Val-229–Ile-249 traverse the membrane as a helical segment. At Leu-250–Ser-256 the chain is on the extracellular side.

In terms of assembly, binds host LCK, human WDR48 and human NXF1/TAP. Forms a complex with activated LCK and STAT1 and STAT3. Post-translationally, phosphorylation on Tyr-114 acts as a docking site for the recruitment of STATs 1 and 3.

Its subcellular location is the host cell membrane. Plays a critical role in virus induced T-cell transformation. Binds to T-cell-specific tyrosine kinase LCK SH2 and SH3 domains, thereby activating its kinase activity. Once phosphorylated by host LCK, forms a complex with at least STAT 1 and 3, resulting on the phosphorylation of STAT3 and presumably STAT1, and their migration into the nucleus to induce transcription of target genes. Stimulates host ILF3/NF-AT-90 activity. Association with host NXF1/TAP transduces the signal up-regulating surface expression of adhesion molecules as well as activating NF-kappa-B activity. Acts synergistically with StpC to stimulate NF-kappa-B activity and interleukin-2 gene expression. Activation of NF-kappa-B protects lymphocytes from apoptosis, thereby facilitating viral induced cell transformation. May cause down-regulation of host LCK and cell apoptosis when stably overexpressed ex vivo. Interaction with WDR48 induce degradation of T-cell receptor in a lysosome-dependent fashion, when both proteins are overexpressed. The biological effect of this interaction remains controversial since no T-cell receptor degradation is observed in infected cells. This Saimiri sciureus (Common squirrel monkey) protein is Tyrosine-protein kinase-interacting protein.